Reading from the N-terminus, the 164-residue chain is uncharacterized protein (164 aa).

This is an uncharacterized protein from Saccharomyces cerevisiae (strain ATCC 204508 / S288c) (Baker's yeast).